Consider the following 274-residue polypeptide: MDRYCVFGNPIGHSKSPLIHRLFAEQTGEALVYDAQLAPLDDFPGFARRFFEQGKGANVTVPFKEEAYRLVDELSERATRAGAVNTLIRLADGRLRGDNTDGAGLLRDLTANAGVELRGKRVLLLGAGGAVRGVLEPFLGECPAELLIANRTARKAVDLAERFADLGAVHGCGFAEVEGPFDLIVNGTSASLAGDVPPLAQSVIEPGRTVCYDMMYAKEPTAFNRWAAERGAARTLDGLGMLVEQAAEAFFLWRGVRPASAPVLETLRRQLATV.

Shikimate contacts are provided by residues S14–S16 and T60. Residue K64 is the Proton acceptor of the active site. NADP(+) is bound at residue E76. 2 residues coordinate shikimate: N85 and D101. Residues G126 to A130, N150 to K155, and M214 contribute to the NADP(+) site. Y216 serves as a coordination point for shikimate. Residue G238 coordinates NADP(+).

Belongs to the shikimate dehydrogenase family. In terms of assembly, homodimer.

The enzyme catalyses shikimate + NADP(+) = 3-dehydroshikimate + NADPH + H(+). Its pathway is metabolic intermediate biosynthesis; chorismate biosynthesis; chorismate from D-erythrose 4-phosphate and phosphoenolpyruvate: step 4/7. Functionally, involved in the biosynthesis of the chorismate, which leads to the biosynthesis of aromatic amino acids. Catalyzes the reversible NADPH linked reduction of 3-dehydroshikimate (DHSA) to yield shikimate (SA). This Pseudomonas aeruginosa (strain ATCC 15692 / DSM 22644 / CIP 104116 / JCM 14847 / LMG 12228 / 1C / PRS 101 / PAO1) protein is Shikimate dehydrogenase (NADP(+)).